Consider the following 290-residue polypeptide: Prepilin leader peptidase/N-methyltransferase (290 aa).

The helical transmembrane segment at 14-34 threads the bilayer; the sequence is LYFSLVFLFSLMIGSFLNVVI. Residues cysteine 74, cysteine 77, cysteine 99, and cysteine 102 each coordinate Zn(2+). The next 6 membrane-spanning stretches (helical) occupy residues 106–126, 130–150, 161–181, 185–205, 232–252, and 261–281; these read ISAR…AVAM, PGWG…LTFI, LTLP…FVSL, VIGA…FKLL, PIVL…LILL, and IPFG…GDSI.

The protein belongs to the peptidase A24 family. Zn(2+) is required as a cofactor.

Its subcellular location is the cell inner membrane. The catalysed reaction is Typically cleaves a -Gly-|-Phe- bond to release an N-terminal, basic peptide of 5-8 residues from type IV prepilin, and then N-methylates the new N-terminal amino group, the methyl donor being S-adenosyl-L-methionine.. Plays an essential role in type IV pili and type II pseudopili formation by proteolytically removing the leader sequence from substrate proteins and subsequently monomethylating the alpha-amino group of the newly exposed N-terminal phenylalanine. This chain is Prepilin leader peptidase/N-methyltransferase (tapD), found in Aeromonas hydrophila.